The following is a 259-amino-acid chain: 5'-nucleotidase SurE 1 (259 aa).

A divalent metal cation is bound by residues D16, D17, S48, and N101.

Belongs to the SurE nucleotidase family. A divalent metal cation serves as cofactor.

Its subcellular location is the cytoplasm. It catalyses the reaction a ribonucleoside 5'-phosphate + H2O = a ribonucleoside + phosphate. Functionally, nucleotidase that shows phosphatase activity on nucleoside 5'-monophosphates. This chain is 5'-nucleotidase SurE 1, found in Burkholderia lata (strain ATCC 17760 / DSM 23089 / LMG 22485 / NCIMB 9086 / R18194 / 383).